We begin with the raw amino-acid sequence, 88 residues long: MANSKSAKKRALQSEKRRQHNASRRSMLRSYVKKVIAAIQAGDHAAATEAFNAAQPILDRMATKGLIHKNKAARHKARLNTRIKALAA.

The segment at 1–27 (MANSKSAKKRALQSEKRRQHNASRRSM) is disordered.

The protein belongs to the bacterial ribosomal protein bS20 family.

Binds directly to 16S ribosomal RNA. The chain is Small ribosomal subunit protein bS20 from Shewanella woodyi (strain ATCC 51908 / MS32).